Reading from the N-terminus, the 94-residue chain is Large ribosomal subunit protein bL27 (94 aa).

A propeptide spanning residues 1-9 (MLRLDLQFF) is cleaved from the precursor.

The protein belongs to the bacterial ribosomal protein bL27 family. In terms of processing, the N-terminus is cleaved by ribosomal processing cysteine protease Prp.

The polypeptide is Large ribosomal subunit protein bL27 (Bacillus pumilus (strain SAFR-032)).